A 1458-amino-acid polypeptide reads, in one-letter code: Phospholipase B1, membrane-associated (1458 aa).

The signal sequence occupies residues 1–21; sequence MGLRPGIFLLELLLLLGQGTP. Over 22 to 1417 the chain is Extracellular; the sequence is QIHTSPRKST…QAEEAPEVLY (1396 aa). Repeat copies occupy residues 39–347, 362–707, and 708–1054. The tract at residues 39 to 1402 is 4 X 308-326 AA approximate repeats; the sequence is ETLKNSPFPC…SPYLYTLRNS (1364 aa). Asparagine 173 and asparagine 240 each carry an N-linked (GlcNAc...) asparagine glycan. Serine 400 is a catalytic residue. Asparagine 493 carries an N-linked (GlcNAc...) asparagine glycan. Residue aspartate 514 is part of the active site. N-linked (GlcNAc...) asparagine glycans are attached at residues asparagine 529 and asparagine 590. Histidine 655 is a catalytic residue. 8 N-linked (GlcNAc...) asparagine glycosylation sites follow: asparagine 690, asparagine 783, asparagine 797, asparagine 809, asparagine 1055, asparagine 1113, asparagine 1275, and asparagine 1378. Repeat unit 4 spans residues 1064–1402; the sequence is IENWGSDFLC…SPYLYTLRNS (339 aa). Positions 1403 to 1445 are necessary for membrane localization; the sequence is RLLPDQAEEAPEVLYWAVPVAAGVGLVVGIIGTVVWRCRRGGR. A helical transmembrane segment spans residues 1418–1438; it reads WAVPVAAGVGLVVGIIGTVVW. Residues 1439–1458 are Cytoplasmic-facing; it reads RCRRGGRREDPPMSLRTVAL.

It belongs to the 'GDSL' lipolytic enzyme family. Phospholipase B1 subfamily. In terms of processing, undergoes proteolytic cleavage in the ileum. Expressed in the epidermis (at protein level).

It is found in the apical cell membrane. It catalyses the reaction a 1,2-diacyl-sn-glycero-3-phosphocholine + H2O = a 1-acyl-sn-glycero-3-phosphocholine + a fatty acid + H(+). It carries out the reaction a 1-O-alkyl-2-acyl-sn-glycero-3-phosphocholine + H2O = a 1-O-alkyl-sn-glycero-3-phosphocholine + a fatty acid + H(+). The catalysed reaction is a 1-acyl-sn-glycero-3-phosphocholine + H2O = sn-glycerol 3-phosphocholine + a fatty acid + H(+). The enzyme catalyses a triacylglycerol + H2O = a diacylglycerol + a fatty acid + H(+). It catalyses the reaction 1,2-dihexadecanoyl-sn-glycero-3-phosphocholine + H2O = 1-hexadecanoyl-sn-glycero-3-phosphocholine + hexadecanoate + H(+). It carries out the reaction 1-hexadecanoyl-2-(9Z-octadecenoyl)-sn-glycero-3-phosphocholine + H2O = 1-hexadecanoyl-sn-glycero-3-phosphocholine + (9Z)-octadecenoate + H(+). The catalysed reaction is 1,2-di-(9Z-octadecenoyl)-sn-glycero-3-phosphocholine + H2O = 1-(9Z-octadecenoyl)-sn-glycero-3-phosphocholine + (9Z)-octadecenoate + H(+). The enzyme catalyses 1-hexadecanoyl-2-(9Z,12Z-octadecadienoyl)-sn-glycero-3-phosphocholine + H2O = (9Z,12Z)-octadecadienoate + 1-hexadecanoyl-sn-glycero-3-phosphocholine + H(+). It catalyses the reaction 1-hexadecanoyl-2-(9Z,12Z-octadecadienoyl)-sn-glycero-3-phosphocholine + H2O = 2-(9Z,12Z-octadecadienoyl)-sn-glycero-3-phosphocholine + hexadecanoate + H(+). It carries out the reaction 1-hexadecanoyl-2-(9Z-octadecenoyl)-sn-glycero-3-phosphoethanolamine + H2O = 1-hexadecanoyl-sn-glycero-3-phosphoethanolamine + (9Z)-octadecenoate + H(+). The catalysed reaction is 1-hexadecanoyl-2-(9Z-octadecenoyl)-sn-glycero-3-phospho-(1'-sn-glycerol) + H2O = 1-hexadecanoyl-sn-glycero-3-phospho-(1'-sn-glycerol) + (9Z)-octadecenoate + H(+). The enzyme catalyses 1,2-dihexadecanoyl-sn-glycero-3-phosphocholine + 2 H2O = sn-glycerol 3-phosphocholine + 2 hexadecanoate + 2 H(+). It catalyses the reaction 1-O-hexadecyl-2-(9Z)-octadecenoyl-sn-glycero-3-phosphocholine + H2O = 1-O-hexadecyl-sn-glycero-3-phosphocholine + (9Z)-octadecenoate + H(+). It carries out the reaction 1-hexadecanoyl-sn-glycero-3-phosphocholine + H2O = sn-glycerol 3-phosphocholine + hexadecanoate + H(+). The catalysed reaction is 1,2,3-tri-(9Z-octadecenoyl)-glycerol + H2O = di-(9Z)-octadecenoylglycerol + (9Z)-octadecenoate + H(+). The enzyme catalyses 1-hexadecanoyl-2-(9Z)-octadecenoyl-3-octadecanoyl-sn-glycerol + H2O = 1-hexadecanoyl-2-(9Z-octadecenoyl)-sn-glycerol + octadecanoate + H(+). It catalyses the reaction 1,3-dihexadecanoyl-2-(9Z-octadecenoyl)glycerol + H2O = 1,3-dihexadecanoylglycerol + (9Z)-octadecenoate + H(+). It carries out the reaction 1,3-dihexadecanoyl-2-(9Z-octadecenoyl)glycerol + H2O = 1-hexadecanoyl-2-(9Z-octadecenoyl)-glycerol + hexadecanoate + H(+). The catalysed reaction is 1-hexadecanoyl-2-(9Z)-octadecenoyl-3-octadecanoyl-sn-glycerol + H2O = 1-hexadecanoyl-3-octadecanoyl-sn-glycerol + (9Z)-octadecenoate + H(+). The enzyme catalyses 1-hexadecanoyl-2-(9Z)-octadecenoyl-3-octadecanoyl-sn-glycerol + H2O = 2-(9Z-octadecenoyl)-3-octadecanoyl-sn-glycerol + hexadecanoate + H(+). It catalyses the reaction 1-octadecanoyl-2-(9Z,12Z)-octadecadienoyl-sn-glycerol + H2O = 1-octadecanoyl-sn-glycerol + (9Z,12Z)-octadecadienoate + H(+). It carries out the reaction 1,2-di-(9Z-octadecenoyl)-sn-glycerol + H2O = 1-(9Z-octadecenoyl)-sn-glycerol + (9Z)-octadecenoate + H(+). The catalysed reaction is 2,3-di-(9Z)-octadecenoyl-sn-glycerol + H2O = 3-(9Z-octadecenoyl)-sn-glycerol + (9Z)-octadecenoate + H(+). The enzyme catalyses 1,3-di-(9Z-octadecenoyl)-glycerol + H2O = 1-(9Z-octadecenoyl)-glycerol + (9Z)-octadecenoate + H(+). It catalyses the reaction 1-(9Z-octadecenoyl)-glycerol + H2O = glycerol + (9Z)-octadecenoate + H(+). It carries out the reaction 2-(9Z-octadecenoyl)-glycerol + H2O = glycerol + (9Z)-octadecenoate + H(+). Calcium-independent membrane-associated phospholipase that catalyzes complete diacylation of phospholipids by hydrolyzing both sn-1 and sn-2 fatty acyl chains attached to the glycerol backbone (phospholipase B activity). Has dual phospholipase and lysophospholipase activities toward diacylphospholipids. Preferentially cleaves sn-2 ester bonds over sn-1 bonds. Acts as a lipase toward glycerolipid substrates. Hydrolyzes fatty acyl chains of diacylglycerols with preference for the sn-2 position and of triacylglycerols with not positional selectivity. May also hydrolyze long chain retinyl esters such as retinyl palmitate. May contribute to digestion of dietary phospholipids, glycerolipids and retinoids, facilitating lipid absorption at the brush border. This Homo sapiens (Human) protein is Phospholipase B1, membrane-associated (PLB1).